The primary structure comprises 115 residues: MARSTGKDAQALFHSLRSAYAATPTTLKIIDLYVGFAVFTALIQVVYMAIVGSFPFNSFLSGVLSCVGTAVLAVCLRIQVNKDNKEFKDLPPERAFADFVLCNLVLHLVIMNFLG.

Topologically, residues 1-31 (MARSTGKDAQALFHSLRSAYAATPTTLKIID) are cytoplasmic. A helical transmembrane segment spans residues 32–52 (LYVGFAVFTALIQVVYMAIVG). Over 53-55 (SFP) the chain is Lumenal. Residues 56–76 (FNSFLSGVLSCVGTAVLAVCL) form a helical membrane-spanning segment. Topologically, residues 77–94 (RIQVNKDNKEFKDLPPER) are cytoplasmic. The chain crosses the membrane as a helical span at residues 95-115 (AFADFVLCNLVLHLVIMNFLG).

This sequence belongs to the DAD/OST2 family. In terms of assembly, component of the oligosaccharyltransferase (OST) complex.

It is found in the endoplasmic reticulum membrane. It participates in protein modification; protein glycosylation. Its function is as follows. Subunit of the oligosaccharyl transferase (OST) complex that catalyzes the initial transfer of a defined glycan (Glc(3)Man(9)GlcNAc(2) in eukaryotes) from the lipid carrier dolichol-pyrophosphate to an asparagine residue within an Asn-X-Ser/Thr consensus motif in nascent polypeptide chains, the first step in protein N-glycosylation. N-glycosylation occurs cotranslationally and the complex associates with the Sec61 complex at the channel-forming translocon complex that mediates protein translocation across the endoplasmic reticulum (ER). All subunits are required for a maximal enzyme activity. The chain is Dolichyl-diphosphooligosaccharide--protein glycosyltransferase subunit DAD1 (DAD1) from Citrus unshiu (Satsuma mandarin).